A 704-amino-acid polypeptide reads, in one-letter code: Zinc finger protein MSN2 (704 aa).

The disordered stretch occupies residues 84 to 246 (PSTTDNSLHL…SISNSNSNST (163 aa)). A compositionally biased stretch (basic and acidic residues) spans 91–112 (LHLKADSNKNRDARTIENDSEI). Polar residues predominate over residues 113–133 (KSTNNASGSGANQYTTLTSPY). The segment covering 141-166 (NMNNPLQSPSPSSVPQNPTINPPINT) has biased composition (low complexity). Polar residues-rich tracts occupy residues 167 to 193 (ASNE…QQHT) and 204 to 220 (NGAN…NNLN). The segment covering 228–246 (NSDTNSYSNSISNSNSNST) has biased composition (low complexity). The short motif at 261–269 (SMLDDYVSS) is the 9aaTAD element. Phosphoserine occurs at positions 288 and 304. Positions 418–437 (NRVQHKQLTSSHNNSSTNMK) are disordered. Residues 426 to 437 (TSSHNNSSTNMK) are compositionally biased toward polar residues. Ser-451 and Ser-582 each carry phosphoserine. Residues 592-634 (LTNQQNNISSSSVNSTGNGAGVTKERRPSYRRKSMTPSRRSSV) form a disordered region. Low complexity predominate over residues 593–608 (TNQQNNISSSSVNSTG). Residue Ser-633 is modified to Phosphoserine. C2H2-type zinc fingers lie at residues 647-665 (FHCH…LKRH) and 676-698 (FACH…IKTH).

As to quaternary structure, interacts with WHI2.

The protein resides in the cytoplasm. It localises to the nucleus. In terms of biological role, positive transcriptional factor that acts as a component of the stress responsive system. Recognizes and binds to the stress response element (STRE) which is involved in the response to various forms of stress (heat, oxidative, osmotic, etc.). Involved in the regulation of the CTT1, DDR2, HSP12 genes. May be regulated via WHI2-PSR1 complex phosphatase activity. The protein is Zinc finger protein MSN2 (MSN2) of Saccharomyces cerevisiae (strain ATCC 204508 / S288c) (Baker's yeast).